Consider the following 412-residue polypeptide: Proteasome-activating nucleotidase (412 aa).

Residues 18-72 (YRYLVDRVAGMESQNQELKEQIRQLESDKRYIETQKIRYEREVRKLKSEIEHLKT) are a coiled coil. Residues 197 to 202 (GTGKTL) and histidine 336 each bind ATP. The tract at residues 410-412 (MFA) is docks into pockets in the proteasome alpha-ring to cause gate opening.

Belongs to the AAA ATPase family. Homohexamer. The hexameric complex has a two-ring architecture resembling a top hat that caps the 20S proteasome core at one or both ends. Upon ATP-binding, the C-terminus of PAN interacts with the alpha-rings of the proteasome core by binding to the intersubunit pockets.

The protein resides in the cytoplasm. Its function is as follows. ATPase which is responsible for recognizing, binding, unfolding and translocation of substrate proteins into the archaeal 20S proteasome core particle. Is essential for opening the gate of the 20S proteasome via an interaction with its C-terminus, thereby allowing substrate entry and access to the site of proteolysis. Thus, the C-termini of the proteasomal ATPase function like a 'key in a lock' to induce gate opening and therefore regulate proteolysis. Unfolding activity requires energy from ATP hydrolysis, whereas ATP binding alone promotes ATPase-20S proteasome association which triggers gate opening, and supports translocation of unfolded substrates. In Methanospirillum hungatei JF-1 (strain ATCC 27890 / DSM 864 / NBRC 100397 / JF-1), this protein is Proteasome-activating nucleotidase.